The following is a 211-amino-acid chain: MTGVFITLEGGDGVGKSTQSALLREWLEEQGHEVVVTREPGGSDLGQEIREIVLHRRGHIAPRAEALLYAADRAHHVETVVRPALERGAVVLQDRYLDSSVAYQGAGRVLDAAEIRDLSLWAAQGLLPDLTVLLDLDQAAARIRLDAARTRFDRLEAERADFHERVRQAFLGLAAAEPERFLVVDAGWPREVIAAEIRARAHVLIAAGASA.

ATP is bound at residue 10 to 17 (GGDGVGKS).

The protein belongs to the thymidylate kinase family.

The enzyme catalyses dTMP + ATP = dTDP + ADP. Phosphorylation of dTMP to form dTDP in both de novo and salvage pathways of dTTP synthesis. This Clavibacter sepedonicus (Clavibacter michiganensis subsp. sepedonicus) protein is Thymidylate kinase.